Consider the following 625-residue polypeptide: tRNA uridine 5-carboxymethylaminomethyl modification enzyme MnmG (625 aa).

FAD contacts are provided by residues Gly-11–Gly-16, Val-123, and Ser-178. NAD(+) is bound at residue Gly-271–Phe-285. Gln-368 lines the FAD pocket.

This sequence belongs to the MnmG family. In terms of assembly, homodimer. Heterotetramer of two MnmE and two MnmG subunits. FAD is required as a cofactor.

It localises to the cytoplasm. NAD-binding protein involved in the addition of a carboxymethylaminomethyl (cmnm) group at the wobble position (U34) of certain tRNAs, forming tRNA-cmnm(5)s(2)U34. In Bacteroides fragilis (strain YCH46), this protein is tRNA uridine 5-carboxymethylaminomethyl modification enzyme MnmG.